Reading from the N-terminus, the 508-residue chain is UDP-N-acetylmuramoylalanine--D-glutamate ligase (508 aa).

138 to 144 (GTNGKTT) provides a ligand contact to ATP. Positions 294–314 (FDEPAPRRKKDAPPPTRAGGR) are disordered.

This sequence belongs to the MurCDEF family.

The protein resides in the cytoplasm. It carries out the reaction UDP-N-acetyl-alpha-D-muramoyl-L-alanine + D-glutamate + ATP = UDP-N-acetyl-alpha-D-muramoyl-L-alanyl-D-glutamate + ADP + phosphate + H(+). It participates in cell wall biogenesis; peptidoglycan biosynthesis. In terms of biological role, cell wall formation. Catalyzes the addition of glutamate to the nucleotide precursor UDP-N-acetylmuramoyl-L-alanine (UMA). The sequence is that of UDP-N-acetylmuramoylalanine--D-glutamate ligase from Bordetella parapertussis (strain 12822 / ATCC BAA-587 / NCTC 13253).